The primary structure comprises 287 residues: Ribosomal RNA small subunit methyltransferase I (287 aa).

Belongs to the methyltransferase superfamily. RsmI family.

The protein resides in the cytoplasm. The enzyme catalyses cytidine(1402) in 16S rRNA + S-adenosyl-L-methionine = 2'-O-methylcytidine(1402) in 16S rRNA + S-adenosyl-L-homocysteine + H(+). Its function is as follows. Catalyzes the 2'-O-methylation of the ribose of cytidine 1402 (C1402) in 16S rRNA. The polypeptide is Ribosomal RNA small subunit methyltransferase I (Streptococcus pyogenes serotype M3 (strain ATCC BAA-595 / MGAS315)).